Consider the following 149-residue polypeptide: Large ribosomal subunit protein uL15 (149 aa).

Residues 1–53 (MRLHTLQPAPGAKSTRKRVGRGTSSGHGKTSGFGHKGQKARSGRVGKRGFEGG) form a disordered region. A compositionally biased stretch (gly residues) spans 23–35 (TSSGHGKTSGFGH). Positions 36-47 (KGQKARSGRVGK) are enriched in basic residues.

Belongs to the universal ribosomal protein uL15 family. In terms of assembly, part of the 50S ribosomal subunit.

Binds to the 23S rRNA. The protein is Large ribosomal subunit protein uL15 of Coprothermobacter proteolyticus (strain ATCC 35245 / DSM 5265 / OCM 4 / BT).